Reading from the N-terminus, the 575-residue chain is MSSSLSPTLQTVNGMDQDEPLPLFPSHYPTALGVDRGTVCIPSPYADNGHAEMSFCGPSAPENPAIAPPLSPSLFWSSHNPHAMPALPLHCPPALPYSEPHIHTAWVDTKPHTSGRHSSFLSRPKLFGKRPEDGDGDEALDDDDPSSSSSGAVVKRDMHFCVVCHDYASGYHYGVWSCEGCKAFFKRSIQGHNDYICPATNQCTIDKNRRKSCQACRLRKCYEMGMMKCGARRERCGYRASRRTAPMRDGSARPVGVRGQSQRLPHTPLHVSLSIPVSRASAESGFSGLSPEQLVYCILEAEPPQIYLKQQMKKPYTESTVMMSLTQLADKELVLMISWAKKIPGFVELSLAHQVQLLECCWLEVLMLGLMWRSIDHPGKLIFSLDLKLNRDEGNCVEGIMEIFDMLLAGSSRFRELKLQKEEYVCLKALILLNSSMYMTSSACEKDLESRTKLLRLLDAVTDALVWAISRTGLSTQQQSARLAHLLMLLSHIRHLSNKGMEHLSSMKRKNVVLLYDLLLEMLDANMAQSRHVSTSVCTDPVTPATSPNTPLPPQLHSPVAHHVTQVNESQCSQE.

The interval 1-160 (MSSSLSPTLQ…GAVVKRDMHF (160 aa)) is modulating. The interval 108 to 151 (DTKPHTSGRHSSFLSRPKLFGKRPEDGDGDEALDDDDPSSSSSG) is disordered. Acidic residues predominate over residues 134-145 (GDGDEALDDDDP). 2 NR C4-type zinc fingers span residues 161–181 (CVVCHDYASGYHYGVWSCEGC) and 197–221 (CPATNQCTIDKNRRKSCQACRLRKC). Residues 161–226 (CVVCHDYASG…RLRKCYEMGM (66 aa)) constitute a DNA-binding region (nuclear receptor). In terms of domain architecture, NR LBD spans 290–526 (SPEQLVYCIL…DLLLEMLDAN (237 aa)). Over residues 537-549 (VCTDPVTPATSPN) the composition is skewed to polar residues. Residues 537-557 (VCTDPVTPATSPNTPLPPQLH) form a disordered region.

This sequence belongs to the nuclear hormone receptor family. NR3 subfamily. In terms of assembly, binds DNA as a homodimer. Can form a heterodimer with ER-alpha. Ovary and testis.

It localises to the nucleus. In terms of biological role, binds estrogens with an affinity similar to that of ER-alpha, and activates expression of reporter genes containing estrogen response elements (ERE) in an estrogen-dependent manner. The protein is Estrogen receptor beta (esr2) of Ictalurus punctatus (Channel catfish).